The primary structure comprises 274 residues: 2,3,4,5-tetrahydropyridine-2,6-dicarboxylate N-succinyltransferase (274 aa).

This sequence belongs to the transferase hexapeptide repeat family.

It is found in the cytoplasm. It carries out the reaction (S)-2,3,4,5-tetrahydrodipicolinate + succinyl-CoA + H2O = (S)-2-succinylamino-6-oxoheptanedioate + CoA. Its pathway is amino-acid biosynthesis; L-lysine biosynthesis via DAP pathway; LL-2,6-diaminopimelate from (S)-tetrahydrodipicolinate (succinylase route): step 1/3. The chain is 2,3,4,5-tetrahydropyridine-2,6-dicarboxylate N-succinyltransferase from Salmonella agona (strain SL483).